The primary structure comprises 1235 residues: N-acetylglucosamine-1-phosphotransferase subunits alpha/beta (1235 aa).

Residues 22-42 (VCFVGVVVTIVSAFQFGEVVL) form a helical membrane-spanning segment. N-linked (GlcNAc...) asparagine glycans are attached at residues asparagine 83, asparagine 114, asparagine 148, and asparagine 179. Intrachain disulfides connect cysteine 438–cysteine 461, cysteine 452–cysteine 468, cysteine 505–cysteine 528, and cysteine 519–cysteine 535. 2 LNR repeats span residues 438–473 (CAEG…GNTA) and 505–545 (CNQG…ELYK). The Ca(2+) site is built by aspartate 449, aspartate 464, aspartate 467, aspartate 516, aspartate 531, and aspartate 534. 2 N-linked (GlcNAc...) asparagine glycosylation sites follow: asparagine 614 and asparagine 729. Residues 699-823 (NISLLPKEAQ…AQPTLGVTVS (125 aa)) form the DMAP1-binding domain. 2 disordered regions span residues 751-783 (QART…HRSE) and 830-850 (LIVP…AEGN). Residues 837 to 848 (HLPKEEESDRAE) are compositionally biased toward basic and acidic residues. One can recognise an EF-hand domain in the interval 984–1019 (VQPLNISQVFHEVDTDQSGVLSDREIRTLATRIHDL). Residue asparagine 988 is glycosylated (N-linked (GlcNAc...) asparagine). Aspartate 997, aspartate 999, serine 1001, and glutamate 1008 together coordinate Ca(2+). A glycan (N-linked (GlcNAc...) asparagine) is linked at asparagine 1108. Residues 1194 to 1214 (VLATLIIFTIFSFFAEQIIAL) traverse the membrane as a helical segment.

Belongs to the stealth family. Hexamer of two alpha, two beta and two gamma (GNPTG) subunits; disulfide-linked. The alpha and/or the beta subunits of the enzyme constitute the catalytic subunits. Interacts with LYSET; facilitates proper localization of GNPTAB. In terms of processing, the alpha- and beta-subunits are generated by a proteolytic cleavage by MBTPS1 protease at the Lys-907-Asp-908 bond.

The protein localises to the golgi apparatus membrane. The enzyme catalyses N(4)-[alpha-D-mannosyl-(1-&gt;2)-alpha-D-mannosyl-(glycan)]-L-asparaginyl-[protein] + UDP-N-acetyl-alpha-D-glucosamine = N(4)-[6-(N-acetyl-alpha-D-glucosaminyl-1-phospho)-alpha-D-mannosyl-(1-&gt;2)-alpha-D-mannosyl-(glycan)]-L-asparaginyl-[protein] + UMP + H(+). Its function is as follows. Catalyzes the formation of mannose 6-phosphate (M6P) markers on high mannose type oligosaccharides in the Golgi apparatus. M6P residues are required to bind to the M6P receptors (MPR), which mediate the vesicular transport of lysosomal enzymes to the endosomal/prelysosomal compartment. The protein is N-acetylglucosamine-1-phosphotransferase subunits alpha/beta (Gnptab) of Mus musculus (Mouse).